Here is a 264-residue protein sequence, read N- to C-terminus: Putative ankyrin repeat domain-containing protein 19 (264 aa).

ANK repeat units follow at residues 67–96, 100–129, 133–162, 166–195, and 199–228; these read KDRT…QINI, LNRT…NPNI, YSNT…NIEA, EGNT…NLHA, and FRRT…NIFS.

The sequence is that of Putative ankyrin repeat domain-containing protein 19 (ANKRD19P) from Homo sapiens (Human).